The primary structure comprises 502 residues: AMP phosphorylase (502 aa).

AMP contacts are provided by residues glycine 168, 195-200, and threonine 204; that span reads SRAITS. The active-site Proton donor is the aspartate 257. Residues serine 265 and lysine 289 each coordinate AMP.

The protein belongs to the thymidine/pyrimidine-nucleoside phosphorylase family. Type 2 subfamily.

The catalysed reaction is AMP + phosphate = alpha-D-ribose 1,5-bisphosphate + adenine. It carries out the reaction CMP + phosphate = cytosine + alpha-D-ribose 1,5-bisphosphate. It catalyses the reaction UMP + phosphate = alpha-D-ribose 1,5-bisphosphate + uracil. In terms of biological role, catalyzes the conversion of AMP and phosphate to adenine and ribose 1,5-bisphosphate (R15P). Exhibits phosphorylase activity toward CMP and UMP in addition to AMP. Functions in an archaeal AMP degradation pathway, together with R15P isomerase and RubisCO. This is AMP phosphorylase from Hyperthermus butylicus (strain DSM 5456 / JCM 9403 / PLM1-5).